The primary structure comprises 574 residues: Meiotically up-regulated gene 72 protein (574 aa).

The tract at residues 339–374 (VRAGTPQSSPNFNPAMRRSPVGAASRSPSRSTIGIS) is disordered. A Phosphothreonine modification is found at threonine 343. Over residues 364 to 374 (RSPSRSTIGIS) the composition is skewed to polar residues. Position 392 is a phosphoserine (serine 392). 2 disordered regions span residues 422 to 451 (TSPSGLNPTGRPSRFGGRVRGNPLTMNKAG) and 495 to 574 (RNRR…RRMD). Residues 541-554 (LYDTSRYPTRNSKP) are compositionally biased toward polar residues.

It localises to the cytoplasm. Functionally, has a role in meiosis. The sequence is that of Meiotically up-regulated gene 72 protein (mug72) from Schizosaccharomyces pombe (strain 972 / ATCC 24843) (Fission yeast).